Consider the following 358-residue polypeptide: Chorismate synthase (358 aa).

Arginine 46 is a binding site for NADP(+). Residues 123–125 (RSS), 235–236 (NA), glycine 275, 290–294 (KATPS), and arginine 316 each bind FMN.

Belongs to the chorismate synthase family. Homotetramer. The cofactor is FMNH2.

The catalysed reaction is 5-O-(1-carboxyvinyl)-3-phosphoshikimate = chorismate + phosphate. The protein operates within metabolic intermediate biosynthesis; chorismate biosynthesis; chorismate from D-erythrose 4-phosphate and phosphoenolpyruvate: step 7/7. Its function is as follows. Catalyzes the anti-1,4-elimination of the C-3 phosphate and the C-6 proR hydrogen from 5-enolpyruvylshikimate-3-phosphate (EPSP) to yield chorismate, which is the branch point compound that serves as the starting substrate for the three terminal pathways of aromatic amino acid biosynthesis. This reaction introduces a second double bond into the aromatic ring system. The polypeptide is Chorismate synthase (Aliarcobacter butzleri (strain RM4018) (Arcobacter butzleri)).